Here is a 148-residue protein sequence, read N- to C-terminus: MLRLLNKRFYCKFATKTKVRPEKLNFKQLTHPTKVPQTPVKAAFPNTSANEIELDPKSIQLLERLALVDLDSERALETLKSSIQFADKITHIQTDNVRPLYTVLEQQQLQLRNDLVTEGDCRGKVLSNAKVTDEDYFVSPPGNIPLEQ.

Residues 1–10 constitute a mitochondrion transit peptide; it reads MLRLLNKRFY.

The protein belongs to the GatC family. As to quaternary structure, subunit of the heterotrimeric GatCAB amidotransferase (AdT) complex, composed of A, B and C subunits.

The protein localises to the mitochondrion. The enzyme catalyses L-glutamyl-tRNA(Gln) + L-glutamine + ATP + H2O = L-glutaminyl-tRNA(Gln) + L-glutamate + ADP + phosphate + H(+). Allows the formation of correctly charged Gln-tRNA(Gln) through the transamidation of misacylated Glu-tRNA(Gln) in the mitochondria. The reaction takes place in the presence of glutamine and ATP through an activated gamma-phospho-Glu-tRNA(Gln). The polypeptide is Glutamyl-tRNA(Gln) amidotransferase subunit C, mitochondrial (Drosophila ananassae (Fruit fly)).